Consider the following 418-residue polypeptide: Adenylosuccinate synthetase 2 (418 aa).

GTP-binding positions include 12–18 and 40–42; these read GDEGKGR and GHT. The active-site Proton acceptor is D13. Mg(2+) contacts are provided by D13 and G40. Residues 13–16, 38–41, T127, K141, T239, and R301 each bind IMP; these read DEGK and NAGH. Residue H41 is the Proton donor of the active site. 297 to 303 lines the substrate pocket; that stretch reads AVTGRPR. GTP is bound by residues R303, 329 to 331, and 407 to 409; these read KID and SVG.

The protein belongs to the adenylosuccinate synthetase family. In terms of assembly, homodimer. It depends on Mg(2+) as a cofactor.

It is found in the cytoplasm. It catalyses the reaction IMP + L-aspartate + GTP = N(6)-(1,2-dicarboxyethyl)-AMP + GDP + phosphate + 2 H(+). It participates in purine metabolism; AMP biosynthesis via de novo pathway; AMP from IMP: step 1/2. Functionally, plays an important role in the de novo pathway of purine nucleotide biosynthesis. Catalyzes the first committed step in the biosynthesis of AMP from IMP. This is Adenylosuccinate synthetase 2 from Pseudoalteromonas translucida (strain TAC 125).